The chain runs to 189 residues: Putative biopolymer transport protein ExbB-like 1 (189 aa).

3 helical membrane-spanning segments follow: residues Phe-14 to Phe-34, Leu-99 to Val-119, and Leu-147 to Leu-167.

The protein belongs to the ExbB/TolQ family.

The protein localises to the cell inner membrane. In Helicobacter pylori (strain ATCC 700392 / 26695) (Campylobacter pylori), this protein is Putative biopolymer transport protein ExbB-like 1.